The following is a 318-amino-acid chain: tRNA uridine(34) hydroxylase (318 aa).

The region spanning glutamate 123–glutamine 217 is the Rhodanese domain. The active-site Cysteine persulfide intermediate is the cysteine 177.

The protein belongs to the TrhO family.

It carries out the reaction uridine(34) in tRNA + AH2 + O2 = 5-hydroxyuridine(34) in tRNA + A + H2O. In terms of biological role, catalyzes oxygen-dependent 5-hydroxyuridine (ho5U) modification at position 34 in tRNAs. This Staphylococcus aureus (strain Mu3 / ATCC 700698) protein is tRNA uridine(34) hydroxylase.